Consider the following 123-residue polypeptide: Small ribosomal subunit protein uS12 (123 aa).

At Asp89 the chain carries 3-methylthioaspartic acid.

The protein belongs to the universal ribosomal protein uS12 family. Part of the 30S ribosomal subunit. Contacts proteins S8 and S17. May interact with IF1 in the 30S initiation complex.

Its function is as follows. With S4 and S5 plays an important role in translational accuracy. Interacts with and stabilizes bases of the 16S rRNA that are involved in tRNA selection in the A site and with the mRNA backbone. Located at the interface of the 30S and 50S subunits, it traverses the body of the 30S subunit contacting proteins on the other side and probably holding the rRNA structure together. The combined cluster of proteins S8, S12 and S17 appears to hold together the shoulder and platform of the 30S subunit. The protein is Small ribosomal subunit protein uS12 of Beijerinckia indica subsp. indica (strain ATCC 9039 / DSM 1715 / NCIMB 8712).